The primary structure comprises 315 residues: Pantothenate kinase (315 aa).

Position 94–101 (94–101 (GSVAVGKS)) interacts with ATP.

This sequence belongs to the prokaryotic pantothenate kinase family.

Its subcellular location is the cytoplasm. The enzyme catalyses (R)-pantothenate + ATP = (R)-4'-phosphopantothenate + ADP + H(+). It participates in cofactor biosynthesis; coenzyme A biosynthesis; CoA from (R)-pantothenate: step 1/5. This is Pantothenate kinase from Shewanella amazonensis (strain ATCC BAA-1098 / SB2B).